The primary structure comprises 234 residues: uncharacterized protein (234 aa).

68–70 (GES) serves as a coordination point for L-glutamine. Catalysis depends on Cys101, which acts as the Nucleophile. L-glutamine contacts are provided by residues Arg131 and 167–168 (IR). Active-site charge relay system residues include His208 and Glu210.

It belongs to the glutaminase PdxT/SNO family.

The protein localises to the cytoplasm. The enzyme catalyses L-glutamine + H2O = L-glutamate + NH4(+). This is an uncharacterized protein from Schizosaccharomyces pombe (strain 972 / ATCC 24843) (Fission yeast).